A 91-amino-acid chain; its full sequence is UPF0250 protein PSEEN4821 (91 aa).

The protein belongs to the UPF0250 family.

This chain is UPF0250 protein PSEEN4821, found in Pseudomonas entomophila (strain L48).